The primary structure comprises 506 residues: 2,3-bisphosphoglycerate-independent phosphoglycerate mutase (506 aa).

2 residues coordinate Mn(2+): Asp12 and Ser63. Catalysis depends on Ser63, which acts as the Phosphoserine intermediate. Substrate contacts are provided by residues His122, 151–152, Arg182, Arg188, 253–256, and Lys323; these read RD and RADR. Mn(2+)-binding residues include Asp390, His394, Asp432, His433, and His451.

The protein belongs to the BPG-independent phosphoglycerate mutase family. As to quaternary structure, monomer. Requires Mn(2+) as cofactor.

The enzyme catalyses (2R)-2-phosphoglycerate = (2R)-3-phosphoglycerate. It participates in carbohydrate degradation; glycolysis; pyruvate from D-glyceraldehyde 3-phosphate: step 3/5. Its function is as follows. Catalyzes the interconversion of 2-phosphoglycerate and 3-phosphoglycerate. This is 2,3-bisphosphoglycerate-independent phosphoglycerate mutase from Wolbachia pipientis wMel.